The primary structure comprises 696 residues: D-(-)-3-hydroxybutyrate oligomer hydrolase (696 aa).

The first 20 residues, 1 to 20 (MTRLGWGRRMVFGAALAAVA), serve as a signal peptide directing secretion. The active-site Charge relay system is the serine 309.

The protein belongs to the D-(-)-3-hydroxybutyrate oligomer hydrolase family.

It is found in the secreted. It carries out the reaction (3R)-hydroxybutanoate dimer + H2O = 2 (R)-3-hydroxybutanoate + H(+). The protein operates within lipid metabolism; butanoate metabolism. Functionally, participates in the degradation of poly-3-hydroxybutyrate (PHB). It works downstream of poly(3-hydroxybutyrate) depolymerase, hydrolyzing D(-)-3-hydroxybutyrate oligomers of various length (3HB-oligomers) into 3HB-monomers. This chain is D-(-)-3-hydroxybutyrate oligomer hydrolase, found in Burkholderia lata (strain ATCC 17760 / DSM 23089 / LMG 22485 / NCIMB 9086 / R18194 / 383).